The chain runs to 90 residues: Large ribosomal subunit protein bL27 (90 aa).

The protein belongs to the bacterial ribosomal protein bL27 family.

In Rhodopseudomonas palustris (strain BisB5), this protein is Large ribosomal subunit protein bL27.